The following is a 169-amino-acid chain: Ribosome maturation factor RimM (169 aa).

The PRC barrel domain occupies 94 to 166; the sequence is EEGFYDHELE…TATITPPDGL (73 aa).

The protein belongs to the RimM family. As to quaternary structure, binds ribosomal protein uS19.

Its subcellular location is the cytoplasm. An accessory protein needed during the final step in the assembly of 30S ribosomal subunit, possibly for assembly of the head region. Essential for efficient processing of 16S rRNA. May be needed both before and after RbfA during the maturation of 16S rRNA. It has affinity for free ribosomal 30S subunits but not for 70S ribosomes. In Corynebacterium efficiens (strain DSM 44549 / YS-314 / AJ 12310 / JCM 11189 / NBRC 100395), this protein is Ribosome maturation factor RimM.